Reading from the N-terminus, the 158-residue chain is 2-C-methyl-D-erythritol 2,4-cyclodiphosphate synthase (158 aa).

The a divalent metal cation site is built by D8 and H10. 4-CDP-2-C-methyl-D-erythritol 2-phosphate contacts are provided by residues 8 to 10 (DVH) and 34 to 35 (HS). H42 provides a ligand contact to a divalent metal cation. Residues 56-58 (DIG), 61-65 (FPDDD), 132-135 (TTFE), and F139 each bind 4-CDP-2-C-methyl-D-erythritol 2-phosphate.

This sequence belongs to the IspF family. In terms of assembly, homotrimer. A divalent metal cation is required as a cofactor.

It catalyses the reaction 4-CDP-2-C-methyl-D-erythritol 2-phosphate = 2-C-methyl-D-erythritol 2,4-cyclic diphosphate + CMP. Its pathway is isoprenoid biosynthesis; isopentenyl diphosphate biosynthesis via DXP pathway; isopentenyl diphosphate from 1-deoxy-D-xylulose 5-phosphate: step 4/6. Involved in the biosynthesis of isopentenyl diphosphate (IPP) and dimethylallyl diphosphate (DMAPP), two major building blocks of isoprenoid compounds. Catalyzes the conversion of 4-diphosphocytidyl-2-C-methyl-D-erythritol 2-phosphate (CDP-ME2P) to 2-C-methyl-D-erythritol 2,4-cyclodiphosphate (ME-CPP) with a corresponding release of cytidine 5-monophosphate (CMP). In Natranaerobius thermophilus (strain ATCC BAA-1301 / DSM 18059 / JW/NM-WN-LF), this protein is 2-C-methyl-D-erythritol 2,4-cyclodiphosphate synthase.